A 173-amino-acid chain; its full sequence is Protein GrpE (173 aa).

Over residues 1–28 the composition is skewed to basic and acidic residues; the sequence is MTEEEKTKSEAEEIEQNNKEEEQEKSVE. Positions 1-30 are disordered; that stretch reads MTEEEKTKSEAEEIEQNNKEEEQEKSVEEL.

The protein belongs to the GrpE family. In terms of assembly, homodimer.

It localises to the cytoplasm. Participates actively in the response to hyperosmotic and heat shock by preventing the aggregation of stress-denatured proteins, in association with DnaK and GrpE. It is the nucleotide exchange factor for DnaK and may function as a thermosensor. Unfolded proteins bind initially to DnaJ; upon interaction with the DnaJ-bound protein, DnaK hydrolyzes its bound ATP, resulting in the formation of a stable complex. GrpE releases ADP from DnaK; ATP binding to DnaK triggers the release of the substrate protein, thus completing the reaction cycle. Several rounds of ATP-dependent interactions between DnaJ, DnaK and GrpE are required for fully efficient folding. This Methanosphaera stadtmanae (strain ATCC 43021 / DSM 3091 / JCM 11832 / MCB-3) protein is Protein GrpE.